Here is a 136-residue protein sequence, read N- to C-terminus: ATP synthase epsilon chain (136 aa).

The tract at residues 104–136 (AGMEGQPASPEKVKAQQQLNEARARMQASKSAD) is disordered.

This sequence belongs to the ATPase epsilon chain family. As to quaternary structure, F-type ATPases have 2 components, CF(1) - the catalytic core - and CF(0) - the membrane proton channel. CF(1) has five subunits: alpha(3), beta(3), gamma(1), delta(1), epsilon(1). CF(0) has three main subunits: a, b and c.

The protein localises to the cellular thylakoid membrane. Functionally, produces ATP from ADP in the presence of a proton gradient across the membrane. The protein is ATP synthase epsilon chain of Synechococcus sp. (strain CC9902).